The primary structure comprises 162 residues: Putative ankyrin repeat protein RBE_0151 (162 aa).

3 ANK repeats span residues 49-77 (EKWTDLHLAVGYKNIKLVQSVCNKHNINI), 81-110 (KGRTALELAILGDNLEIVQFLVQNGGVVAP), and 114-145 (YGWSAIHLAIKVGNLDIVKYLYENTKFNEHDK).

The sequence is that of Putative ankyrin repeat protein RBE_0151 from Rickettsia bellii (strain RML369-C).